A 658-amino-acid chain; its full sequence is ATP-dependent RNA helicase DDX3Y (658 aa).

Basic and acidic residues predominate over residues 1 to 10; it reads MSHVVVKNDP. A disordered region spans residues 1-141; that stretch reads MSHVVVKNDP…DDWSKPLPPS (141 aa). An N-acetylserine modification is found at S2. Residues 15–34 are compositionally biased toward polar residues; that stretch reads QLANLDLNSEKQSGGASTAS. The segment covering 44-68 has biased composition (basic and acidic residues); that stretch reads RNREASKGFHDKDSSGWSCSKDKDA. Position 55 is an N6-acetyllysine (K55). Residues S81, S85, and S89 each carry the phosphoserine modification. Residues 93–128 show a composition bias toward basic and acidic residues; that stretch reads GRFDDRGRSDYDGIGNRDRPGFGRFERSGHSRWCDK. Omega-N-methylarginine is present on R100. Position 101 is a phosphoserine (S101). A Phosphotyrosine modification is found at Y103. Position 109 is an omega-N-methylarginine (R109). Residues S129 and S181 each carry the phosphoserine modification. A Q motif motif is present at residues 178–206; it reads ENFSDIDMGEIIMGNIELTRYTRPTPVQK. 198–205 is an ATP binding site; sequence YTRPTPVQ. Positions 209 to 401 constitute a Helicase ATP-binding domain; sequence IPIIKGKRDL…RDFLDEYIFL (193 aa). A Glycyl lysine isopeptide (Lys-Gly) (interchain with G-Cter in SUMO2) cross-link involves residue K213. Residue 222 to 229 coordinates ATP; that stretch reads AQTGSGKT. The short motif at 345–348 is the DEAD box element; sequence DEAD. One can recognise a Helicase C-terminal domain in the interval 412-573; it reads NITQKVVWVE…EVPSWLENMA (162 aa). S454 bears the Phosphoserine mark. Omega-N-methylarginine is present on R588. A phosphoserine mark is found at S590 and S601. The interval 597–625 is disordered; that stretch reads DYRQSSGSSSSGFGASRGSSSRSGGSGYG. The segment covering 601–619 has biased composition (low complexity); it reads SSGSSSSGFGASRGSSSRS. Residues R613 and R628 each carry the omega-N-methylarginine modification.

It belongs to the DEAD box helicase family. DDX3/DED1 subfamily. In terms of assembly, may interact with TDRD3.

It is found in the cytoplasm. The protein localises to the nucleus. The catalysed reaction is ATP + H2O = ADP + phosphate + H(+). Its function is as follows. Probable ATP-dependent RNA helicase. May play a role in spermatogenesis. The sequence is that of ATP-dependent RNA helicase DDX3Y (DDX3Y) from Pongo abelii (Sumatran orangutan).